We begin with the raw amino-acid sequence, 296 residues long: Nucleotide-binding protein Spy49_0545 (296 aa).

13 to 20 contacts ATP; sequence GMSGAGKT. 63-66 serves as a coordination point for GTP; the sequence is DMRS.

Belongs to the RapZ-like family.

Its function is as follows. Displays ATPase and GTPase activities. The sequence is that of Nucleotide-binding protein Spy49_0545 from Streptococcus pyogenes serotype M49 (strain NZ131).